A 319-amino-acid polypeptide reads, in one-letter code: GTP 3',8-cyclase (319 aa).

The Radical SAM core domain occupies 4–227 (KHGRKINYLR…VETEKSSTAL (224 aa)). GTP is bound at residue Arg-13. [4Fe-4S] cluster contacts are provided by Cys-20 and Cys-24. Tyr-26 contributes to the S-adenosyl-L-methionine binding site. Position 27 (Cys-27) interacts with [4Fe-4S] cluster. Arg-63 is a binding site for GTP. Gly-67 is an S-adenosyl-L-methionine binding site. Thr-94 lines the GTP pocket. Ser-118 lines the S-adenosyl-L-methionine pocket. A GTP-binding site is contributed by Lys-155. Position 189 (Met-189) interacts with S-adenosyl-L-methionine. Residues Cys-249 and Cys-252 each contribute to the [4Fe-4S] cluster site. 254–256 (RVR) is a binding site for GTP. Cys-266 serves as a coordination point for [4Fe-4S] cluster.

Belongs to the radical SAM superfamily. MoaA family. In terms of assembly, monomer and homodimer. Requires [4Fe-4S] cluster as cofactor.

It catalyses the reaction GTP + AH2 + S-adenosyl-L-methionine = (8S)-3',8-cyclo-7,8-dihydroguanosine 5'-triphosphate + 5'-deoxyadenosine + L-methionine + A + H(+). It functions in the pathway cofactor biosynthesis; molybdopterin biosynthesis. Catalyzes the cyclization of GTP to (8S)-3',8-cyclo-7,8-dihydroguanosine 5'-triphosphate. This Clostridium botulinum (strain ATCC 19397 / Type A) protein is GTP 3',8-cyclase.